The following is a 186-amino-acid chain: UPF0149 protein Pfl01_5435 (186 aa).

It belongs to the UPF0149 family.

The sequence is that of UPF0149 protein Pfl01_5435 from Pseudomonas fluorescens (strain Pf0-1).